The primary structure comprises 570 residues: Sulfite reductase [NADPH] hemoprotein beta-component (570 aa).

4 residues coordinate [4Fe-4S] cluster: Cys434, Cys440, Cys479, and Cys483. A siroheme-binding site is contributed by Cys483.

This sequence belongs to the nitrite and sulfite reductase 4Fe-4S domain family. As to quaternary structure, alpha(8)-beta(8). The alpha component is a flavoprotein, the beta component is a hemoprotein. Siroheme serves as cofactor. It depends on [4Fe-4S] cluster as a cofactor.

It carries out the reaction hydrogen sulfide + 3 NADP(+) + 3 H2O = sulfite + 3 NADPH + 4 H(+). It functions in the pathway sulfur metabolism; hydrogen sulfide biosynthesis; hydrogen sulfide from sulfite (NADPH route): step 1/1. Functionally, component of the sulfite reductase complex that catalyzes the 6-electron reduction of sulfite to sulfide. This is one of several activities required for the biosynthesis of L-cysteine from sulfate. This chain is Sulfite reductase [NADPH] hemoprotein beta-component, found in Escherichia coli O17:K52:H18 (strain UMN026 / ExPEC).